A 456-amino-acid polypeptide reads, in one-letter code: UDP-glycosyltransferase 74D1 (456 aa).

Residues S279, 332-334, 349-357, and 371-374 contribute to the UDP-alpha-D-glucose site; these read SPQ, HCGWNSTLE, and YSDQ.

Belongs to the UDP-glycosyltransferase family. In terms of tissue distribution, expressed in leaves.

Its function is as follows. Glucosyltransferase that glucosylates jasmonate (JA) and JA derivatives. Also active on indole-3-acetic acid (IAA), 4-coumrate, cinnamate and caffeate. The protein is UDP-glycosyltransferase 74D1 (UGT74D1) of Arabidopsis thaliana (Mouse-ear cress).